Reading from the N-terminus, the 893-residue chain is MPLDPDSSPAPPHRDWFFPPAPPFLPSSRARTPRAPFPSTSRSSNPYSFPDRRPPPTPRSRSRSPLPPPEQQKQQQPPPTTPPPAPRRRDPRYAGVRRGDVRTLTAEKAAAAAAVPTAAQVHGSKSAASATTLRWSGMVSVAAIVLCFSSLVRSNSSLHDQVHHLKAQLAEATTKLQSCITESSMDMSSILSYQSNNSTSQNRGLKNFSLLLSLSTLYAPLLILKYMDLFLKLRSSQDSEEEVPINKRLAYRVDIFLSLQPYAKPLVLLVATLLLIGLGGLALYGVNDDSLLDCLWLSWTFVADSGNHANAEGFGPKLVSVSISIGGMLVFAMMLGLVTDSISEKFDSLRKGRSEVIEQSHTLVLGWSDKLGSLLNQIAIANESLGGGTIVVMAEKDKEEMEADIAKMEFDLKGTAIICRSGSPLILADLKKVSVSKARAIVVLAEEGNADQSDARALRTVLSLTGVKEGLRGHIVVELSDLDNEVLVKLVGGDLVETVVAHDVIGRLMIQCARQPGLAQIWEDILGFENCEFYIKRWPQLDGMQFEDVLISFPDAIPCGIKVASYGGKIILNPDDFYVLQEGDEVLVIAEDDDTYAPAPLPKVMRGYLPKDFVVPKSPERILFCGWRRDMEDMIMVLDAFLAPGSELWMFNDVPEMDRERKLIDGGLDFSRLENITLVHREGNAVIRRHLESLPLESFDSILILADESVEDSAIQADSRSLATLLLIRDIQAKRLPFREAMVSHVTRGSFCEGSWIGEMQQASDKSVIISEILDPRTKNLLSVSKISDYVLSNELVSMALAMVAEDRQINDVLEELFAEQGNEMQIRPADLYLREDEELNFFEVMLRGRQRKEIVIGYRLVDAERAIINPPDKVSRRRWSAKDVFVVITEKE.

The tract at residues 1–94 is disordered; sequence MPLDPDSSPA…APRRRDPRYA (94 aa). The segment covering 65–85 has biased composition (pro residues); that stretch reads PLPPPEQQKQQQPPPTTPPPA. Residues 132 to 152 traverse the membrane as a helical segment; the sequence is TLRWSGMVSVAAIVLCFSSLV. Residues 156–178 are a coiled coil; it reads SSLHDQVHHLKAQLAEATTKLQS. A run of 3 helical transmembrane segments spans residues 210 to 230, 266 to 286, and 318 to 338; these read LLLS…MDLF, LVLL…LYGV, and LVSV…LGLV. RCK N-terminal domains are found at residues 359–500 and 619–792; these read QSHT…ETVV and PERI…DYVL. The stretch at 389-415 forms a coiled coil; sequence TIVVMAEKDKEEMEADIAKMEFDLKGT.

It belongs to the castor/pollux (TC 1.A.1.23) family. In terms of tissue distribution, expressed in roots, leaves, stems and panicles.

The protein localises to the nucleus membrane. Required for mycorrhizal symbiosis. In Oryza sativa subsp. japonica (Rice), this protein is Probable ion channel CASTOR.